Here is a 537-residue protein sequence, read N- to C-terminus: Protoporphyrinogen oxidase 1, chloroplastic (537 aa).

A chloroplast-targeting transit peptide spans 1–34 (MELSLLRPTTQSLLPSFSKPNLRLNVYKPLRLRC). Residue Ser35 is modified to N-acetylserine. Residues 63–68 (GGGISG), 90–91 (EA), and 112–115 (GPNS) each bind FAD. Basic and acidic residues predominate over residues 256-268 (RKNAPKAERDPRL). Residues 256 to 275 (RKNAPKAERDPRLPKPQGQT) form a disordered region. 511-513 (VAL) is a binding site for FAD.

Belongs to the protoporphyrinogen/coproporphyrinogen oxidase family. Protoporphyrinogen oxidase subfamily. FAD is required as a cofactor. In terms of tissue distribution, expressed at high levels in the leaves and at low levels in the roots and floral buds.

It localises to the plastid. It is found in the chloroplast. The enzyme catalyses protoporphyrinogen IX + 3 O2 = protoporphyrin IX + 3 H2O2. Its pathway is porphyrin-containing compound metabolism; protoporphyrin-IX biosynthesis; protoporphyrin-IX from protoporphyrinogen-IX: step 1/1. It functions in the pathway porphyrin-containing compound metabolism; chlorophyll biosynthesis. Inhibited by acifluorfen. In terms of biological role, catalyzes the 6-electron oxidation of protoporphyrinogen-IX to form protoporphyrin-IX. This is Protoporphyrinogen oxidase 1, chloroplastic (PPOX1) from Arabidopsis thaliana (Mouse-ear cress).